Here is a 24-residue protein sequence, read N- to C-terminus: Ranatuerin-4 (24 aa).

A disulfide bridge connects residues cysteine 18 and cysteine 24.

This sequence belongs to the frog skin active peptide (FSAP) family. Ranatuerin subfamily. In terms of tissue distribution, expressed by the skin glands.

The protein localises to the secreted. Antibacterial activity against Gram-positive bacterium S.aureus (MIC=55 uM). Shows no detectable hemolytic activity towards human erythrocytes. This chain is Ranatuerin-4, found in Aquarana catesbeiana (American bullfrog).